The sequence spans 2131 residues: Nonribosomal peptide synthetase criC (2131 aa).

Residues 13–407 (FSQQCFQHPD…GRRDRVTKIR (395 aa)) are adenylation 1. The 77-residue stretch at 525 to 601 (SGPLTIDQTI…ALVEKNRHET (77 aa)) folds into the Carrier 1 domain. Ser-562 bears the O-(pantetheine 4'-phosphoryl)serine mark. Positions 598 to 627 (RHETENRPDSSAFATRTPEESSMPTQGPVT) are disordered. The tract at residues 625–1018 (PVTPLQKRMV…YMSLLDAFLD (394 aa)) is condensation 1. Residues 1069-1447 (ASLHPTHIAV…GRKDRQVKVR (379 aa)) are adenylation 2. Residues 1569 to 1647 (SSEAHLEKLI…DLITLVAQQQ (79 aa)) enclose the Carrier 2 domain. Ser-1607 is subject to O-(pantetheine 4'-phosphoryl)serine. The segment at 1688–2086 (SQSQSTFNVP…EALLLECFRM (399 aa)) is condensation 2.

This sequence belongs to the NRP synthetase family. Pantetheine 4'-phosphate serves as cofactor.

It carries out the reaction L-tryptophan + L-alanine + 2 ATP = cyclo(L-tryptophyl-L-alanyl) + 2 ADP + 2 phosphate + 2 H(+). The protein operates within secondary metabolite biosynthesis. Its pathway is alkaloid biosynthesis. In terms of biological role, nonribosomal peptide synthetase; part of the gene cluster that mediates the biosynthesis of echinulin family alkaloid. The pathway begins with the biosynthesis of the cyclic dipeptide cyclo-L-Trp-L-Ala (cyclo-TA) by the NRPS criC via condensation of L-alanine and L-tryptophan. The prenyltransferase criA then catalyzes the first prenylation step, a reverse prenylation reaction at C2, to yield preechinulin. Preechinulin is the substrate of the cytochrome P450 monooxygenase criE that catalyzes the formation of the double bond between C10 and C11 to produce neoechulin A. The unique prenyltransferase criF functions as a competitive enzyme with criE for preechinulin metabolization and uses preechinulin for effective regiospecific prenylations. Preechinulin is prenylated by criF at C5 or C7. C7-prenylation leads to accumulation of tardioxopiperazine B without further modification by criF. In contrast, the C5-prenylated tardioxopiperazine A can be prenylated again by criF, predominantly at C7 to form echinulin or less frequently at C4 to give variecolorin L. CriF also accepts neoechilunin A to produce varlecolorin G (prenylation at C5) or isoechinulin A (prenylation at C7). CriF further converts isoechinulin A into dehydroechinulin. Moreover, a yet unidentified enzyme can also convert neoechilunin A into neoechilunin B by introducing a double bond between positions C14 and C17 and thus provides a further substrate to criF for C5 and C7 prenylation. The protein is Nonribosomal peptide synthetase criC of Aspergillus cristatus (Chinese Fuzhuan brick tea-fermentation fungus).